Consider the following 1170-residue polypeptide: Anion exchange protein 3 (1170 aa).

Topologically, residues 1 to 656 (MGRSYNEKDF…DLKDALDTQC (656 aa)) are cytoplasmic. 3 disordered regions span residues 17–96 (FHHT…PQLS), 112–167 (FHME…TTRG), and 239–267 (HLVK…RRKR). A compositionally biased stretch (basic residues) spans 32–53 (RFRKRVLSMDRRRKRKRKKKKT). The segment covering 67–76 (VDEEEAESEI) has biased composition (acidic residues). The segment covering 246-259 (RCQLPRSSNGSPPL) has biased composition (polar residues). The next 5 membrane-spanning stretches (helical) occupy residues 657–677 (IAAV…FGGL), 702–722 (FSLL…LLVF), 744–764 (IGFW…SFLV), 774–794 (IFAF…LIKV), and 828–848 (PNTA…AFFL). Residues 657 to 1170 (IAAVIFIYFA…DEYNEIHMLV (514 aa)) form a membrane (anion exchange) region. The Cytoplasmic portion of the chain corresponds to 849 to 863 (RKLRNSRFLGGKVRR). The next 5 helical transmembrane spans lie at 864–884 (VIGD…DILI), 919–939 (FPVW…ILIF), 966–986 (LLLI…WLTA), 1020–1063 (RVTG…LTGI), and 1104–1124 (IVLL…FILI).

Belongs to the anion exchanger (TC 2.A.31) family. Widely expressed at low levels.

It localises to the cell membrane. The enzyme catalyses hydrogencarbonate(in) + chloride(out) = hydrogencarbonate(out) + chloride(in). In terms of biological role, sodium-independent anion exchanger which mediates the electroneutral exchange of chloride for bicarbonate ions across the cell membrane. May be involved in the regulation of intracellular pH, and the modulation of cardiac action potential. This is Anion exchange protein 3 from Danio rerio (Zebrafish).